Reading from the N-terminus, the 89-residue chain is Small cysteine-rich protein 1 (89 aa).

The first 20 residues, 1–20 (MDVRFRLCLFLVILVIVANA), serve as a signal peptide directing secretion. A propeptide spanning residues 21-27 (NVIKEPE) is cleaved from the precursor.

It belongs to the Cnidaria small cysteine-rich protein (SCRiP) family. gamma subfamily. In terms of processing, contains 4 disulfide bonds.

The protein resides in the secreted. The protein localises to the nematocyst. Its function is as follows. Induces neurotoxic symptoms on zebrafish. Has also been claimed to be implied in calcification, but tests on homolog proteins suggest that proteins of this family have a neurotoxic function and not a calcification function. The sequence is that of Small cysteine-rich protein 1 from Acropora millepora (Staghorn coral).